Here is a 280-residue protein sequence, read N- to C-terminus: MKQIALYGKGGIGKSTTSANLSAALVNRGLSVMQIGCDPKRDSTRMLMKGILIPTVLDLIRERGEENLTLDDVVFTGYKGVRCVEAGGPEPGVGCAGRGIIATFQLLERLSAFDEDIIVYDVLGDVVCGGFAMPMRKGYAQEIYLVTSGELMSLYAANNICKAISRISQNVRQVCRLGGVICNSRNLPDEEKLVGAFASEVGSKIIAYIPRSGLVQYAELNNQTVIEFAPDSSLSATYQSLAEEIMTNTDFVIPKPLEIEELEKLARSYLPTIDHQGINH.

8-15 (GKGGIGKS) is an ATP binding site. Cysteine 95 lines the [4Fe-4S] cluster pocket. Arginine 98 is subject to ADP-ribosylarginine; by dinitrogenase reductase ADP-ribosyltransferase. Cysteine 128 is a [4Fe-4S] cluster binding site.

Belongs to the NifH/BchL/ChlL family. In terms of assembly, homodimer. The cofactor is [4Fe-4S] cluster. Post-translationally, the reversible ADP-ribosylation of Arg-98 inactivates the nitrogenase reductase and regulates nitrogenase activity.

The enzyme catalyses N2 + 8 reduced [2Fe-2S]-[ferredoxin] + 16 ATP + 16 H2O = H2 + 8 oxidized [2Fe-2S]-[ferredoxin] + 2 NH4(+) + 16 ADP + 16 phosphate + 6 H(+). The key enzymatic reactions in nitrogen fixation are catalyzed by the nitrogenase complex, which has 2 components: the iron protein and the molybdenum-iron protein. The sequence is that of Nitrogenase iron protein from Methanospirillum hungatei JF-1 (strain ATCC 27890 / DSM 864 / NBRC 100397 / JF-1).